Reading from the N-terminus, the 634-residue chain is CREB-regulated transcription coactivator 1 (634 aa).

Ser-64 and Ser-113 each carry phosphoserine. Disordered stretches follow at residues 110–174, 191–221, 258–331, and 357–479; these read RLGS…GSQD, TTSEADKNLSKQAWDTKKTGSRPKSCEVPGI, LPTP…TLSP, and QAGS…HTST. Thr-149 is subject to Phosphothreonine. Ser-151 bears the Phosphoserine; by SIK1 and SIK2 mark. Positions 151 to 174 are enriched in polar residues; it reads SDSALHQSTMTPTQPESFSSGSQD. A Phosphothreonine modification is found at Thr-161. Over residues 194–208 the composition is skewed to basic and acidic residues; sequence EADKNLSKQAWDTKK. Residues 242–258 carry the Nuclear export signal motif; that stretch reads TGGSLPDLTNIHFPSPL. Polar residues-rich tracts occupy residues 271-283, 296-305, and 314-331; these read ALSSSSSTGNLAA, GMSTPGSSPQ, and LSLSTEARRQQASPTLSP. Residues 362-397 are compositionally biased toward pro residues; it reads QPPPQPQPPPPPPPASQQPPPPPPPQAPVRLPPGGP. The span at 446 to 479 shows a compositional bias: polar residues; it reads QYRTSAGSPANQSPTSPVSNQGFSPGSSPQHTST.

It belongs to the TORC family. As to quaternary structure, binds, as a tetramer, through its N-terminal region, with the bZIP domain of CREB1. 'Arg-314' in the bZIP domain of CREB1 is essential for this interaction. Interaction, via its C-terminal, with TAF4, enhances recruitment of TAF4 to CREB1. Interacts with 14-3-3 proteins, including YWHAE/14-3-3 epsilon. Interacts with calmodulin-dependent catalytic subunit PPP3CA/calcineurin A. (Microbial infection) Interacts with HTLV1 Tax. Post-translationally, phosphorylation/dephosphorylation states of Ser-151 are required for regulating transduction of CREB activity. TORCs are inactive when phosphorylated, and active when dephosphorylated at this site. This primary site of phosphorylation is mediated by SIKs (SIK1 and SIK2), is regulated by cAMP and calcium levels and is dependent on the phosphorylation of SIKs by LKB1. As to expression, highly expressed in adult and fetal brain. Located to specific regions such as the prefrontal cortex and cerebellum. Very low expression in other tissues such as heart, spleen, lung, skeletal muscle, salivary gland, ovary and kidney.

The protein localises to the cytoplasm. It is found in the nucleus. Transcriptional coactivator for CREB1 which activates transcription through both consensus and variant cAMP response element (CRE) sites. Acts as a coactivator, in the SIK/TORC signaling pathway, being active when dephosphorylated and acts independently of CREB1 'Ser-133' phosphorylation. Enhances the interaction of CREB1 with TAF4. Regulates the expression of specific CREB-activated genes such as the steroidogenic gene, StAR. Potent coactivator of PGC1alpha and inducer of mitochondrial biogenesis in muscle cells. In the hippocampus, involved in late-phase long-term potentiation (L-LTP) maintenance at the Schaffer collateral-CA1 synapses. May be required for dendritic growth of developing cortical neurons. In concert with SIK1, regulates the light-induced entrainment of the circadian clock. In response to light stimulus, coactivates the CREB-mediated transcription of PER1 which plays an important role in the photic entrainment of the circadian clock. Functionally, (Microbial infection) Plays a role of coactivator for TAX activation of the human T-cell leukemia virus type 1 (HTLV-1) long terminal repeats (LTR). The sequence is that of CREB-regulated transcription coactivator 1 from Homo sapiens (Human).